The following is an 80-amino-acid chain: Large ribosomal subunit protein eL38 (80 aa).

It belongs to the eukaryotic ribosomal protein eL38 family. Component of the large ribosomal subunit (LSU). Mature N.crassa ribosomes consist of a small (40S) and a large (60S) subunit. The 40S small subunit contains 1 molecule of ribosomal RNA (18S rRNA) and at least 32 different proteins. The large 60S subunit contains 3 rRNA molecules (26S, 5.8S and 5S rRNA) and at least 42 different proteins.

The protein localises to the cytoplasm. Its function is as follows. Component of the ribosome, a large ribonucleoprotein complex responsible for the synthesis of proteins in the cell. The small ribosomal subunit (SSU) binds messenger RNAs (mRNAs) and translates the encoded message by selecting cognate aminoacyl-transfer RNA (tRNA) molecules. The large subunit (LSU) contains the ribosomal catalytic site termed the peptidyl transferase center (PTC), which catalyzes the formation of peptide bonds, thereby polymerizing the amino acids delivered by tRNAs into a polypeptide chain. The nascent polypeptides leave the ribosome through a tunnel in the LSU and interact with protein factors that function in enzymatic processing, targeting, and the membrane insertion of nascent chains at the exit of the ribosomal tunnel. This is Large ribosomal subunit protein eL38 (rpl-38) from Neurospora crassa (strain ATCC 24698 / 74-OR23-1A / CBS 708.71 / DSM 1257 / FGSC 987).